We begin with the raw amino-acid sequence, 219 residues long: Small ribosomal subunit protein uS2m (219 aa).

It belongs to the universal ribosomal protein uS2 family. Component of the mitochondrial ribosome small subunit.

It is found in the mitochondrion. The sequence is that of Small ribosomal subunit protein uS2m (RPS2) from Arabidopsis thaliana (Mouse-ear cress).